The following is a 183-amino-acid chain: MDPSQNPNVFHATTIVCVRRGEHVAIAGDGQVTLGHTVMKGNARKVRRLGRDGQVLAGFAGAAADAFTLFELFEAKLEKHGQLQRAAVELAKDWRTERRLGKLEALLAVADKETSLIISGTGDVIEPEDGIIAIGSGGSYALSAARALMAHTELDARTIASEAIGIAGDICIYTNRNVVVEEL.

Thr13 is an active-site residue. 3 residues coordinate Na(+): Gly168, Cys171, and Thr174.

Belongs to the peptidase T1B family. HslV subfamily. In terms of assembly, a double ring-shaped homohexamer of HslV is capped on each side by a ring-shaped HslU homohexamer. The assembly of the HslU/HslV complex is dependent on binding of ATP.

Its subcellular location is the cytoplasm. It catalyses the reaction ATP-dependent cleavage of peptide bonds with broad specificity.. Allosterically activated by HslU binding. In terms of biological role, protease subunit of a proteasome-like degradation complex believed to be a general protein degrading machinery. This is ATP-dependent protease subunit HslV from Stenotrophomonas maltophilia (strain R551-3).